The sequence spans 307 residues: Recombination-associated protein RdgC (307 aa).

The protein belongs to the RdgC family.

The protein localises to the cytoplasm. The protein resides in the nucleoid. May be involved in recombination. This is Recombination-associated protein RdgC from Colwellia psychrerythraea (strain 34H / ATCC BAA-681) (Vibrio psychroerythus).